A 670-amino-acid chain; its full sequence is DUF724 domain-containing protein 1 (670 aa).

Disordered regions lie at residues 283 to 315 (HNGP…PMTP) and 368 to 445 (ANAE…NNDD). Polar residues-rich tracts occupy residues 294-309 (SPSN…SSSG), 379-392 (RNQN…TQQM), and 426-442 (CNGS…SICN). A DUF724 domain is found at 484-669 (PFAKKLPFWK…LEFQTTVSTP (186 aa)).

As to expression, expressed in stems and flowers.

The protein resides in the nucleus. Its function is as follows. May be involved in the polar growth of plant cells via transportation of RNAs. This chain is DUF724 domain-containing protein 1, found in Arabidopsis thaliana (Mouse-ear cress).